Consider the following 788-residue polypeptide: Mediator of RNA polymerase II transcription subunit 15 (788 aa).

An interaction with SREBF1 region spans residues 9-73 (DWRSTAFRQK…IHFRDIHNKK (65 aa)). Disordered stretches follow at residues 95-139 (GAAG…MAPH) and 260-329 (QQQA…PLVS). Residues 108–117 (QSLGGMGSLG) are compositionally biased toward gly residues. Positions 260–269 (QQQALQAQPP) are enriched in low complexity. Over residues 270–284 (IQQPPMQQPQPPPSQ) the composition is skewed to pro residues. Low complexity-rich tracts occupy residues 285 to 294 (ALPQQLQQMH) and 309 to 329 (PVAQ…PLVS). Asymmetric dimethylarginine is present on arginine 349. Residues 412 to 530 (SSSIPLGRQP…PAGSSQAEEQ (119 aa)) are disordered. A compositionally biased stretch (low complexity) spans 426–446 (SQSSLPMLSSPSPGQQVQTPQ). Pro residues predominate over residues 447-459 (SMPPPPQPSPQPG). Positions 460–482 (QPSSQPNSNVSSGPAPSPSSFLP) are enriched in low complexity. Polar residues-rich tracts occupy residues 493–503 (VTARTPQNFSV) and 511–529 (TPVN…QAEE). Positions 547-564 (RRMINKIDKNEDRKKDLS) match the Nuclear localization signal motif. At threonine 603 the chain carries Phosphothreonine.

It belongs to the Mediator complex subunit 15 family. Component of the Mediator complex, which is composed of MED1, MED4, MED6, MED7, MED8, MED9, MED10, MED11, MED12, MED13, MED13L, MED14, MED15, MED16, MED17, MED18, MED19, MED20, MED21, MED22, MED23, MED24, MED25, MED26, MED27, MED29, MED30, MED31, CCNC, CDK8 and CDC2L6/CDK11. The MED12, MED13, CCNC and CDK8 subunits form a distinct module termed the CDK8 module. Mediator containing the CDK8 module is less active than Mediator lacking this module in supporting transcriptional activation. Individual preparations of the Mediator complex lacking one or more distinct subunits have been variously termed ARC, CRSP, DRIP, PC2, SMCC and TRAP. Interacts with SMAD2, SMAD3, SREBF1 and SREBF2. Interacts with WWTR1. Interacts with TRIM11. Ubiquitinated by TRIM11, leading to proteasomal degradation. Expressed in all tissues examined, including heart, brain, lung, spleen, thymus, pancreas, blood leukocyte and placenta. However, the level of expression varied, with highest expression in the placenta and peripheral blood and lowest in the pancreas and kidney.

The protein localises to the cytoplasm. It is found in the nucleus. Component of the Mediator complex, a coactivator involved in the regulated transcription of nearly all RNA polymerase II-dependent genes. Mediator functions as a bridge to convey information from gene-specific regulatory proteins to the basal RNA polymerase II transcription machinery. Mediator is recruited to promoters by direct interactions with regulatory proteins and serves as a scaffold for the assembly of a functional preinitiation complex with RNA polymerase II and the general transcription factors. Required for cholesterol-dependent gene regulation. Positively regulates the Nodal signaling pathway. In Homo sapiens (Human), this protein is Mediator of RNA polymerase II transcription subunit 15 (MED15).